The following is a 66-amino-acid chain: Large ribosomal subunit protein bL35 (66 aa).

Composition is skewed to basic residues over residues 1–16 and 23–45; these read MPKF…RFKR and KRSH…RQLR. The tract at residues 1 to 66 is disordered; sequence MPKFKTHRAS…RIRQMLSGLK (66 aa).

It belongs to the bacterial ribosomal protein bL35 family.

The chain is Large ribosomal subunit protein bL35 from Latilactobacillus sakei subsp. sakei (strain 23K) (Lactobacillus sakei subsp. sakei).